Here is a 256-residue protein sequence, read N- to C-terminus: Follistatin-related protein 3 (256 aa).

Residues 1 to 23 (MRPGALWPLLWGALVWAVGSVGA) form the signal peptide. Residues 34 to 105 (GVCWLQQGKE…SCDGVECGPG (72 aa)) form the TB domain. Intrachain disulfides connect C36/C59, C46/C90, C60/C93, C97/C108, C102/C117, C119/C151, C123/C144, and C133/C165. Residue N71 is glycosylated (N-linked (GlcNAc...) asparagine). The Follistatin-like 1 domain maps to 97-117 (CDGVECGPGKACRMLGGRPHC). 2 consecutive Kazal-like domains span residues 111-167 (LGGR…RCQK) and 187-243 (SAHC…ICTG). In terms of domain architecture, Follistatin-like 2 spans 168-191 (SCAQVVCPRPQSCLVDQTGSAHCV). Disulfide bonds link C193–C227, C198–C220, and C209–C241. A glycan (N-linked (GlcNAc...) asparagine) is linked at N213.

In terms of assembly, interacts with INHBA and INHBB. Interacts with FN1. Interacts with ADAM12. Interacts with MLLT10; the interaction enhances MLLT10 in vitro transcriptional activity and self-association. Interacts with MSTN.

Its subcellular location is the secreted. The protein localises to the nucleus. In terms of biological role, the secreted form is a binding and antagonizing protein for members of the TGF-beta family, such as activin, BMP2 and MSTN. Inhibits activin A-, activin B-, BMP2- and MSDT-induced cellular signaling; more effective on activin A than on activin B. Involved in bone formation; inhibits osteoclast differentiation. Involved in hematopoiesis; involved in differentiation of hemopoietic progenitor cells, increases hematopoietic cell adhesion to fibronectin and seems to contribute to the adhesion of hematopoietic precursor cells to the bone marrow stroma. The nuclear form is probably involved in transcriptional regulation via interaction with MLLT10. This is Follistatin-related protein 3 (Fstl3) from Rattus norvegicus (Rat).